The sequence spans 139 residues: Small ribosomal subunit protein uS12m (139 aa).

Residues 1–21 (MLSTLYQNDLKKKRNRRRNRS) are disordered. The segment covering 11 to 20 (KKKRNRRRNR) has biased composition (basic residues).

The protein belongs to the universal ribosomal protein uS12 family.

The protein localises to the mitochondrion. Functionally, protein S12 is involved in the translation initiation step. This is Small ribosomal subunit protein uS12m (RPS12) from Paramecium tetraurelia.